The primary structure comprises 282 residues: 4-diphosphocytidyl-2-C-methyl-D-erythritol kinase (282 aa).

The active site involves lysine 9. Position 98–108 (98–108 (PMGGGLGGGSS)) interacts with ATP. Residue aspartate 140 is part of the active site.

This sequence belongs to the GHMP kinase family. IspE subfamily. As to quaternary structure, homodimer.

It carries out the reaction 4-CDP-2-C-methyl-D-erythritol + ATP = 4-CDP-2-C-methyl-D-erythritol 2-phosphate + ADP + H(+). Its pathway is isoprenoid biosynthesis; isopentenyl diphosphate biosynthesis via DXP pathway; isopentenyl diphosphate from 1-deoxy-D-xylulose 5-phosphate: step 3/6. Its function is as follows. Catalyzes the phosphorylation of the position 2 hydroxy group of 4-diphosphocytidyl-2C-methyl-D-erythritol. The sequence is that of 4-diphosphocytidyl-2-C-methyl-D-erythritol kinase from Salmonella agona (strain SL483).